We begin with the raw amino-acid sequence, 3174 residues long: MNNNNNNNNNNNNNNTNNIIDDNDEIAIVGIGFRLPSGDISKSNDSPIELWDNLMNGFDGIIESRERWSDNFNELGEISNGNAGLLPLDEWKSFDPLFFGINPSEAPSIDPQQRLLLKCTWEALEDARIDPMKIRGSNTSVFIGCSTNDYQNQQQNQMNNNKSNIFGLTNHSISNRISYCFDFRNESITIDTACSSSLNAIKMGYQSIKFSKQNNCNLSIVGGVNLLLDTNVSKSFTHLNMLSKSTNGTARCMTFDESADGYVRGEGVGIVVLKSLKQALSDGNTIYCIINGASSNVDGGGLKDKQNFFSPSSISQCENIKMAIQSTNGKIKFNNIDYIEAHGTGTPTGDPIELEAISNSFKQLNDIAIGSGSCSGSNNNTTQQPLLIGSIKSSIGHLEAASGVASLIKCCLMFKNGYFVPNINFNKPNPMIKFNEWNLKVVTEPIQFNTNKQITMLINSFGITGSNCCLILSQFKNNENQQQQQQQQQQQQQQQQQQQQQRGQQQYDNSQPKKYLIPFSANSTLSLKKYQSIIESEEFQLKINFNEFVKNQIFNKSLSLYQRLVIFSVSNWDEFNKQKQSQKEKEKEKEREGEEKEQLNRVQTLNSKSSTMSMVHSKNPIVVFVFAGQGSQYSRMAMELYNSEPIFKQSINMFDNKLFKYYGYSVFEKFISITDHDDDISIQHPTIAQPIMCMLAISLFEFYKHWGIEASFIVGHSLGEIPAAYCSGMITLDTLCYLIYHRSLAQIQTHCNGGRMLSVNISSEDYLSSNYSTKYPDIEIACYNSPNSIVLGGKEQQLNQISNELKDKGIFSKMLASLSSFHTSNQKIVKDDISKLNIDYELPKIPIFSTVTTNLYYNNFNDSNNNSNNNNNNVETTTTPFNSEYIYNNIVEPVKFSQTISNLYKHIEINKLGTDIVFIELAPHPTLQFYLKQMIPVSTNYFSGKISIYSPLHKKKNDTMEIQKTIAKLYCENRYNINFKSQFDCGSINNHNHTVIPPLQQPQPQPLPNYQWDDEKYWKEDLIQQKHRIEGPPIDILGLSNYDNSSNVKSYQTFIDIKKEPFKYLKGHIVNGKYYFPGCGYIDNLLKLYPSQDLTISSMEFKSPLILIDGINQCLQTNVFQTGKTEFKLYYHFKDNKSNEWVQSCIANFQLLNNNNSNNNNSNNNNNNKKLNLQEIISKKCNKTKISRIDLYQHIKSKTGLTYNDEFQGVIQCFLGDSCSLSEVTVNSSTSKSFFKTQLLDSCLHGMIALIQENCQLVFHKIEGLKYYSSNLQVYETNDINSSNNSIFVYSKFKSRLGNSYLASIIIMLKDGTILIEIERVICKSLKIVKNPLEIEYPIDLVYSRYLQPRDSPIGAPSSFKSLYESDQFKSKDIYSSNISIYQNFISSSLFLNINKRNSNITIKEIENQSIDQLFLNFKSIFINKNLENSIQYERLFKSVFKTIKMFGYKNNNNNNFKELKKQMENNNNYKILKRSTRVISKQLFPFENENDSNLDSPQILFEDGLLDKFYSDTEFVAKNHQLLAEIIKESIKPLVLKKEKITIRILEFGGGVSSLSMVVLNKITQLLEESNNVFNQIDIEYTWSDISTSFIPDAKLKLSKIINNNNNNNNNENNNDLDLDGGKFGIKIIYRSLDLEEPLIEKQNLKYSYYDYVIMSNVLHVVKDIRFSIDQIYKVLVPNGQLLFIEPPFNSIILDNVFGVFNQWWSFQDTDIRKDSCCMNQQSWFDLLTNHNFKYIIMSKELESVSFLIHCKKPSILEININNNNNNNNNNNNNNNNNNNNNNNNNNYEDNVIIFCNEIDKDNKNNNNHFIKMLESIYSFKIIIKISSIKEFIELEESNIITNKSIIYFIKPIEQLNFENFKLVTFEFIEINKRLLSSNNLKCKHVLITTNVNNGKNYLSASVIGAAKYFEEFSEQLQLFYIDFDQQSIENLNLISKIDSLIDETINTQKEFIIMNNEIYYERYKKESIKNLINTFKSNSFEYGIGVSNDSFSNVYLKLTSNLEYKLKSRKEIIKSNKVEVNVLSLGVNYKDYLVYCGLVPPEICNRKGDINNPEIGIDFSGIITRVGKDCGEDQFKVGDEVYGIAFDSSSSHIIIDKDYIVKKPTNLSHSEAASIPAVYLTSLYSIFNIGNFNIQDNESILIHSGTGGVGLSALNILKWKGHKSHLFVTVGSKEKEQYLIDTYGDFITGIYSTRNKDYVKQIKLKLKQLGSNKKGVDLILNTLSSDYLDSNFKCLECGGRIVDLSITHLNPNEYIDFSKFKYNYGYHNVELLFINKRKLQILFLQISNAIENNQLNLIPINEYSNLKIKEAIEFINERKHIGKIIVNNNINLINKLIENNNFNSSSSSGSSSGSGSIDVKEPILKSNYKINNDNLGSTILVTGQTGIVLEILKWIVKFSDCVKDIIIFSKSPMKWELELLVNNNSNIRFHFKSIDICNESLVNESIDQILKDNPLINNVDSIFHFAFQQVSRKVNKIDMESLDISHGAKTFGAINLHNQSIKRNWKLKQFVMASSIASIIGSSKQCSYVCANNVLDSLSRFRKSIGLPSICTNYGSLGDAGFVSRFESVGEMLVGQGLNPISTNLILGSLDLQIQNQHLSTNLLICNFNFPAFKVNAQIPKQKFDFIINSIDGGGGGSNSSSGSGGGGKVVDSLNIKDIFINKISEFLSIESSKINQDLRLLDYGADSLLTVQLKNWIDKEISPNIITIQQIQNNTISLVIKIIITAIDNKKIKDSNQQSNNNENIKTGSFIGGKSKNNNVKNLKFWKKQIKLKVIGNEFSSSTSSYVNITKNGGTSKNNKRILFPFSSGGYLSTYLLFNLVKDSNCSIVYCLNTSIDLIIQSLKYHQLYFNLNQNEISKINIISVSSEKDYNQLFIKNNDINLIIIVSSDSFQDSILFEQEFNETELNLVKELIKSLIINGYCNNNDNNNNNNNNKISIINISSIYIYLGISNEFINENEYNSIEIPNFESIEKLPLSSGKIQSSLLIEHFLKDCSIKFNIPSTMIRIPPIFSNIETGLGNENELLQLFLQSCHSIGFYPNVSTSYPTIPINHLSNLIINQINNQNYYEHDNEKGKLLFNTINLNNNNSNNNNINSQQINQILKCEFNCKQIEFNDWIQILTDSNNSSCVYKYLQLHNIITKYSNSNTDTIQENNLEIINQMIINHLKQKK.

The Ketosynthase family 3 (KS3) domain maps to 23–474 (NDEIAIVGIG…GSNCCLILSQ (452 aa)). Catalysis depends on for beta-ketoacyl synthase activity residues Cys194, His342, and His397. Coiled coils occupy residues 472-509 (LSQF…QYDN) and 574-604 (EFNK…RVQT). The segment covering 578–599 (QKQSQKEKEKEKEREGEEKEQL) has biased composition (basic and acidic residues). Residues 578 to 601 (QKQSQKEKEKEKEREGEEKEQLNR) are disordered. An acyl/malonyl transferase region spans residues 707–740 (GIEASFIVGHSLGEIPAAYCSGMITLDTLCYLIY). Ser717 functions as the For acyl/malonyl transferase activity in the catalytic mechanism. The tract at residues 1034–1156 (IDILGLSNYD…ANFQLLNNNN (123 aa)) is N-terminal hotdog fold. The PKS/mFAS DH domain occupies 1034-1332 (IDILGLSNYD…CKSLKIVKNP (299 aa)). The active-site Proton acceptor; for dehydratase activity is His1068. The C-terminal hotdog fold stretch occupies residues 1182–1332 (NKTKISRIDL…CKSLKIVKNP (151 aa)). The active-site Proton donor; for dehydratase activity is the Asp1241. The stretch at 1758-1793 (LEININNNNNNNNNNNNNNNNNNNNNNNNNNYEDNV) forms a coiled coil. The Carrier domain maps to 2653–2730 (VDSLNIKDIF…LVIKIIITAI (78 aa)). Ser2690 carries the O-(pantetheine 4'-phosphoryl)serine modification.

Pantetheine 4'-phosphate serves as cofactor.

Probable polyketide synthase. The chain is Probable polyketide synthase 15 (pks15) from Dictyostelium discoideum (Social amoeba).